Reading from the N-terminus, the 825-residue chain is Interleukin-4 receptor subunit alpha (825 aa).

Positions 1 to 25 are cleaved as a signal peptide; it reads MGWLCSGLLFPVSCLVLLQVASSGN. At 26–232 the chain is on the extracellular side; that stretch reads MKVLQEPTCV…NSYREPFEQH (207 aa). C34 and C44 are disulfide-bonded. N53 is a glycosylation site (N-linked (GlcNAc...) asparagine). A disulfide bridge connects residues C74 and C86. N-linked (GlcNAc...) asparagine glycosylation is found at N98, N128, N134, N176, and N209. Positions 125-224 constitute a Fibronectin type-III domain; the sequence is APGNLTVHTN…WSPSTKWHNS (100 aa). Positions 212 to 216 match the WSXWS motif motif; that stretch reads WSEWS. A helical transmembrane segment spans residues 233 to 256; sequence LLLGVSVSCIVILAVCLLCYVSIT. At 257–825 the chain is on the cytoplasmic side; that stretch reads KIKKEWWDQI…SVGPTYMRVS (569 aa). The short motif at 262 to 270 is the Box 1 motif element; that stretch reads WWDQIPNPA. Disordered stretches follow at residues 373-397 and 433-485; these read EEEE…DFQE and LPPS…LTCT. The segment at 437–557 is required for IRS1 activation and IL4-induced cell growth; the sequence is GSTSAHMPWD…ETWEQILRRN (121 aa). Residues 475-485 show a composition bias toward polar residues; the sequence is PTQSPDNLTCT. 4 positions are modified to phosphotyrosine: Y497, Y575, Y603, and Y631. The required for IL4-induced gene expression stretch occupies residues 558–657; it reads VLQHGAAAAP…VPVPLFTFGL (100 aa). The tract at residues 651–703 is disordered; it reads PLFTFGLDREPPRSPQSSHLPSSSPEHLGLEPGEKVEDMPKPPLPQEQATDPL. Residues 665–677 are compositionally biased toward low complexity; that stretch reads PQSSHLPSSSPEH. The segment covering 678-690 has biased composition (basic and acidic residues); that stretch reads LGLEPGEKVEDMP. An ITIM motif motif is present at residues 711–716; the sequence is IVYSAL. The interval 782–809 is disordered; it reads PSGISEKSKSSSSFHPAPGNAQSSSQTP.

Belongs to the type I cytokine receptor family. Type 4 subfamily. As to quaternary structure, the functional IL4 receptor is formed by initial binding of IL4 to IL4R. Subsequent recruitment to the complex of the common gamma chain, in immune cells, creates a type I receptor and, in non-immune cells, of IL13RA1 forms a type II receptor. IL4R can also interact with the IL13/IL13RA1 complex to form a similar type II receptor. Interacts with PIK3C3. Interacts with the SH2-containing phosphatases, PTPN6/SHIP1, PTPN11/SHIP2 and INPP5D/SHIP. Interacts with JAK1 through a Box 1-containing region; inhibited by SOCS5. Interacts with SOCS5; inhibits IL4 signaling. Interacts with JAK3. Interacts with CLM1. Interacts with IL13RA2. Post-translationally, on IL4 binding, phosphorylated on C-terminal tyrosine residues. Phosphorylation on any one of tyrosine residues, Tyr-575, Tyr-603 or Tyr-631, is required for STAT6-induced gene induction. In terms of processing, the soluble form (sIL4R/IL4BP) can also be produced by proteolytic cleavage at the cell surface (shedding) by a metalloproteinase. In terms of tissue distribution, isoform 1 and isoform 2 are highly expressed in activated T-cells.

It localises to the cell membrane. The protein localises to the secreted. Receptor for both interleukin 4 and interleukin 13. Couples to the JAK1/2/3-STAT6 pathway. The IL4 response is involved in promoting Th2 differentiation. The IL4/IL13 responses are involved in regulating IgE production and, chemokine and mucus production at sites of allergic inflammation. In certain cell types, can signal through activation of insulin receptor substrates, IRS1/IRS2. In terms of biological role, soluble IL4R (sIL4R) inhibits IL4-mediated cell proliferation and IL5 up-regulation by T-cells. The sequence is that of Interleukin-4 receptor subunit alpha (IL4R) from Homo sapiens (Human).